The primary structure comprises 1073 residues: Receptor-type guanylate cyclase gcy-23 (1073 aa).

The N-terminal stretch at 1–15 (MRRELFIFLLLLGEC) is a signal peptide. Residues 16–458 (ANVKVKVGHI…FRNEKCDYTT (443 aa)) are Extracellular-facing. The N-linked (GlcNAc...) asparagine glycan is linked to asparagine 336. A helical transmembrane segment spans residues 459 to 479 (LIIGGCIVLLIILLIICFFIL). The Cytoplasmic portion of the chain corresponds to 480–1073 (SRVCENRALA…QQQNFSQLGI (594 aa)). Positions 508-808 (MKSMLSIGSS…RVRLNTENYL (301 aa)) constitute a Protein kinase domain. Residues 813–844 (SLVDQMMRMMEQYANNLEKLVAERTGMLEEAN) are a coiled coil. The Guanylate cyclase domain maps to 878 to 1008 (TVMFSDIVGF…DTVNVASRME (131 aa)). Residues aspartate 883, isoleucine 884, and aspartate 927 each contribute to the Mg(2+) site.

Belongs to the adenylyl cyclase class-4/guanylyl cyclase family. As to expression, expressed specifically in AFD sensory neurons.

It is found in the cell membrane. The protein localises to the cell projection. It localises to the cilium. The catalysed reaction is GTP = 3',5'-cyclic GMP + diphosphate. Its function is as follows. Guanylate cyclase involved in the production of the second messenger cGMP. Regulates thermotaxis responses in AFD sensory neurons. May regulate AFD neuronal activity such as calcium responses to temperature gradients. The polypeptide is Receptor-type guanylate cyclase gcy-23 (Caenorhabditis elegans).